We begin with the raw amino-acid sequence, 896 residues long: Translation initiation factor IF-2 (896 aa).

Disordered regions lie at residues 53-81 and 117-301; these read HGGESAPTKMTLQRKSVSTLSVGSGSASK and AEEA…ESMD. A compositionally biased stretch (polar residues) spans 60–79; that stretch reads TKMTLQRKSVSTLSVGSGSA. Residues 117 to 227 show a composition bias toward basic and acidic residues; sequence AEEAASKAKA…ESEKTGDHHV (111 aa). Low complexity predominate over residues 254–266; it reads ATPAPAAAPANTG. The segment covering 273-282 has biased composition (basic and acidic residues); it reads GKDNRRDSRN. Over residues 283–294 the composition is skewed to low complexity; sequence ARGGRNARNNRS. A tr-type G domain is found at 394–563; it reads SRAPVVTIMG…LLEAEVLELK (170 aa). Residues 403-410 are G1; the sequence is GHVDHGKT. 403–410 lines the GTP pocket; the sequence is GHVDHGKT. The G2 stretch occupies residues 428 to 432; the sequence is GITQH. The interval 449-452 is G3; it reads DTPG. GTP-binding positions include 449 to 453 and 503 to 506; these read DTPGH and NKID. The segment at 503–506 is G4; the sequence is NKID. Positions 539-541 are G5; it reads SAK.

This sequence belongs to the TRAFAC class translation factor GTPase superfamily. Classic translation factor GTPase family. IF-2 subfamily.

It localises to the cytoplasm. Its function is as follows. One of the essential components for the initiation of protein synthesis. Protects formylmethionyl-tRNA from spontaneous hydrolysis and promotes its binding to the 30S ribosomal subunits. Also involved in the hydrolysis of GTP during the formation of the 70S ribosomal complex. In Shewanella sediminis (strain HAW-EB3), this protein is Translation initiation factor IF-2.